Here is a 227-residue protein sequence, read N- to C-terminus: Cytidylate kinase (227 aa).

Position 12–20 (12–20) interacts with ATP; sequence GPSGAGKGT.

It belongs to the cytidylate kinase family. Type 1 subfamily.

Its subcellular location is the cytoplasm. It catalyses the reaction CMP + ATP = CDP + ADP. The enzyme catalyses dCMP + ATP = dCDP + ADP. This Shigella sonnei (strain Ss046) protein is Cytidylate kinase.